Here is a 471-residue protein sequence, read N- to C-terminus: Putative multidrug resistance protein MdtD (471 aa).

The Periplasmic segment spans residues 1–11 (MTDLPDSTRWQ). Residues 12 to 32 (LWIVAFGFFMQSLDTTIVNTA) traverse the membrane as a helical segment. Residues 33–48 (LPSMAQSLGESPLHMH) lie on the Cytoplasmic side of the membrane. A helical membrane pass occupies residues 49 to 69 (MVIVSYVLTVAVMLPASGWLA). The Periplasmic portion of the chain corresponds to 70–76 (DKVGVRN). Residues 77-97 (IFFTAIVLFTLGSLFCALSGT) form a helical membrane-spanning segment. Residues 98 to 101 (LNEL) lie on the Cytoplasmic side of the membrane. A helical membrane pass occupies residues 102-124 (LLARALQGVGGAMMVPVGRLTVM). Topologically, residues 125 to 137 (KIVPREQYMAAMT) are periplasmic. A helical membrane pass occupies residues 138–158 (FVTLPGQIGPLLGPALGGLLV). Residues 159 to 164 (EYASWH) are Cytoplasmic-facing. Residues 165-185 (WIFLINIPVGIIGAITTLMLM) form a helical membrane-spanning segment. Residues 186 to 196 (PNYTMQTRRFD) are Periplasmic-facing. A helical transmembrane segment spans residues 197–217 (LSGFLLLAVGMAVLTLALDGS). Topologically, residues 218–224 (KGTGFSP) are cytoplasmic. The helical transmembrane segment at 225–245 (LAIAGLVAVGVVALVLYLLHA) threads the bilayer. Topologically, residues 246 to 262 (QNNNRALFSLKLFRTRT) are periplasmic. Residues 263 to 283 (FSLGLAGSFAGRIGSGMLPFM) traverse the membrane as a helical segment. The Cytoplasmic segment spans residues 284 to 285 (TP). The chain crosses the membrane as a helical span at residues 286–306 (VFLQIGFGFSPFHAGLMMIPM). At 307–341 (VLGSMGMKRIVVQVVNRFGYRRVLVATTLGLSLVT) the chain is on the periplasmic side. Residues 342–362 (LLFMTTALLGWYYVLPFVLFL) form a helical membrane-spanning segment. Residues 363–395 (QGMVNSTRFSSMNTLTLKDLPDNLASSGNSLLS) lie on the Cytoplasmic side of the membrane. The helical transmembrane segment at 396-416 (MIMQLSMSIGVTIAGLLLGLF) threads the bilayer. At 417–430 (GSQHVSVDSGTTQT) the chain is on the periplasmic side. A helical membrane pass occupies residues 431-451 (VFMYTWLSMASIIALPAFIFA). Topologically, residues 452 to 471 (RVPNDTHQNVAISRRKRSAQ) are cytoplasmic.

This sequence belongs to the major facilitator superfamily. TCR/Tet family.

Its subcellular location is the cell inner membrane. The sequence is that of Putative multidrug resistance protein MdtD from Escherichia coli O6:H1 (strain CFT073 / ATCC 700928 / UPEC).